We begin with the raw amino-acid sequence, 436 residues long: GTPase Der (436 aa).

EngA-type G domains are found at residues 4 to 167 (PTIA…PNEY) and 175 to 351 (IKFS…ESQN). GTP is bound by residues 10–17 (GRPNVGKS), 57–61 (DTGGI), 119–122 (NKVD), 181–188 (GRPNVGKS), 229–233 (DTAGM), and 294–297 (NKWD). The region spanning 352 to 436 (TRIPSAVLND…PIHLIARKRK (85 aa)) is the KH-like domain.

It belongs to the TRAFAC class TrmE-Era-EngA-EngB-Septin-like GTPase superfamily. EngA (Der) GTPase family. As to quaternary structure, associates with the 50S ribosomal subunit.

GTPase that plays an essential role in the late steps of ribosome biogenesis. This chain is GTPase Der, found in Streptococcus pneumoniae (strain JJA).